Consider the following 345-residue polypeptide: Holliday junction branch migration complex subunit RuvB (345 aa).

Residues 4-185 (TDRLIAPSTQ…FGIVSRLEFY (182 aa)) form a large ATPase domain (RuvB-L) region. ATP-binding positions include Leu-24, Arg-25, Gly-66, Lys-69, Thr-70, Thr-71, 132-134 (EDY), Arg-175, Tyr-185, and Arg-222. Thr-70 contacts Mg(2+). Residues 186–256 (TADELARIVH…IADAALKMLD (71 aa)) are small ATPAse domain (RuvB-S). Residues 259–345 (KLGFDVMDRK…KIGTGELWQQ (87 aa)) are head domain (RuvB-H). The DNA site is built by Arg-295, Arg-314, and Arg-319.

Belongs to the RuvB family. Homohexamer. Forms an RuvA(8)-RuvB(12)-Holliday junction (HJ) complex. HJ DNA is sandwiched between 2 RuvA tetramers; dsDNA enters through RuvA and exits via RuvB. An RuvB hexamer assembles on each DNA strand where it exits the tetramer. Each RuvB hexamer is contacted by two RuvA subunits (via domain III) on 2 adjacent RuvB subunits; this complex drives branch migration. In the full resolvosome a probable DNA-RuvA(4)-RuvB(12)-RuvC(2) complex forms which resolves the HJ.

The protein resides in the cytoplasm. The catalysed reaction is ATP + H2O = ADP + phosphate + H(+). In terms of biological role, the RuvA-RuvB-RuvC complex processes Holliday junction (HJ) DNA during genetic recombination and DNA repair, while the RuvA-RuvB complex plays an important role in the rescue of blocked DNA replication forks via replication fork reversal (RFR). RuvA specifically binds to HJ cruciform DNA, conferring on it an open structure. The RuvB hexamer acts as an ATP-dependent pump, pulling dsDNA into and through the RuvAB complex. RuvB forms 2 homohexamers on either side of HJ DNA bound by 1 or 2 RuvA tetramers; 4 subunits per hexamer contact DNA at a time. Coordinated motions by a converter formed by DNA-disengaged RuvB subunits stimulates ATP hydrolysis and nucleotide exchange. Immobilization of the converter enables RuvB to convert the ATP-contained energy into a lever motion, pulling 2 nucleotides of DNA out of the RuvA tetramer per ATP hydrolyzed, thus driving DNA branch migration. The RuvB motors rotate together with the DNA substrate, which together with the progressing nucleotide cycle form the mechanistic basis for DNA recombination by continuous HJ branch migration. Branch migration allows RuvC to scan DNA until it finds its consensus sequence, where it cleaves and resolves cruciform DNA. The protein is Holliday junction branch migration complex subunit RuvB of Methylobacillus flagellatus (strain ATCC 51484 / DSM 6875 / VKM B-1610 / KT).